The following is a 320-amino-acid chain: HPr kinase/phosphorylase (320 aa).

Residues H141 and K162 contribute to the active site. 156–163 (GHSGLGKS) provides a ligand contact to ATP. S163 is a binding site for Mg(2+). Catalysis depends on D180, which acts as the Proton acceptor; for phosphorylation activity. Proton donor; for dephosphorylation activity. The tract at residues 204–213 (LEVRGLGILN) is important for the catalytic mechanism of both phosphorylation and dephosphorylation. E205 provides a ligand contact to Mg(2+). The active site involves R248. The interval 269-274 (PVAVGR) is important for the catalytic mechanism of dephosphorylation.

This sequence belongs to the HPrK/P family. Homohexamer. Requires Mg(2+) as cofactor.

It carries out the reaction [HPr protein]-L-serine + ATP = [HPr protein]-O-phospho-L-serine + ADP + H(+). It catalyses the reaction [HPr protein]-O-phospho-L-serine + phosphate + H(+) = [HPr protein]-L-serine + diphosphate. In terms of biological role, catalyzes the ATP- as well as the pyrophosphate-dependent phosphorylation of a specific serine residue in HPr, a phosphocarrier protein of the phosphoenolpyruvate-dependent sugar phosphotransferase system (PTS). HprK/P also catalyzes the pyrophosphate-producing, inorganic phosphate-dependent dephosphorylation (phosphorolysis) of seryl-phosphorylated HPr (P-Ser-HPr). The sequence is that of HPr kinase/phosphorylase from Neisseria meningitidis serogroup C / serotype 2a (strain ATCC 700532 / DSM 15464 / FAM18).